The following is a 151-amino-acid chain: UPF0208 membrane protein NT01EI_2692 (151 aa).

The next 2 membrane-spanning stretches (helical) occupy residues 46 to 65 (FAIRFMPPIAMFTLCWQIAL) and 69 to 91 (LGPAIATALFACSLPMQGLWWLG).

This sequence belongs to the UPF0208 family.

The protein localises to the cell inner membrane. In Edwardsiella ictaluri (strain 93-146), this protein is UPF0208 membrane protein NT01EI_2692.